The sequence spans 179 residues: Large ribosomal subunit protein uL5 (179 aa).

It belongs to the universal ribosomal protein uL5 family. In terms of assembly, part of the 50S ribosomal subunit; part of the 5S rRNA/L5/L18/L25 subcomplex. Contacts the 5S rRNA and the P site tRNA. Forms a bridge to the 30S subunit in the 70S ribosome.

Functionally, this is one of the proteins that bind and probably mediate the attachment of the 5S RNA into the large ribosomal subunit, where it forms part of the central protuberance. In the 70S ribosome it contacts protein S13 of the 30S subunit (bridge B1b), connecting the 2 subunits; this bridge is implicated in subunit movement. Contacts the P site tRNA; the 5S rRNA and some of its associated proteins might help stabilize positioning of ribosome-bound tRNAs. The polypeptide is Large ribosomal subunit protein uL5 (Anaplasma marginale (strain Florida)).